Here is a 391-residue protein sequence, read N- to C-terminus: Putative 1-acyl-sn-glycerol-3-phosphate acyltransferase acl-12 (391 aa).

The next 2 helical transmembrane spans lie at 47–67 (FFFM…SLLF) and 84–104 (LCAM…ATVT). The short motif at 124 to 129 (HLGLLD) is the HXXXXD motif element.

The protein belongs to the 1-acyl-sn-glycerol-3-phosphate acyltransferase family.

The protein localises to the membrane. The enzyme catalyses a 1-acyl-sn-glycero-3-phosphate + an acyl-CoA = a 1,2-diacyl-sn-glycero-3-phosphate + CoA. It functions in the pathway phospholipid metabolism; CDP-diacylglycerol biosynthesis; CDP-diacylglycerol from sn-glycerol 3-phosphate: step 2/3. In terms of biological role, converts lysophosphatidic acid (LPA) into phosphatidic acid by incorporating an acyl moiety at the sn-2 position of the glycerol backbone. The polypeptide is Putative 1-acyl-sn-glycerol-3-phosphate acyltransferase acl-12 (acl-12) (Caenorhabditis elegans).